A 138-amino-acid polypeptide reads, in one-letter code: Small ribosomal subunit protein uS11c (138 aa).

The disordered stretch occupies residues 1–24 (MAKPIPKVGSRRNGRSSARKSARR). A compositionally biased stretch (basic residues) spans 9 to 24 (GSRRNGRSSARKSARR).

Belongs to the universal ribosomal protein uS11 family. In terms of assembly, part of the 30S ribosomal subunit.

The protein resides in the plastid. The protein localises to the chloroplast. The protein is Small ribosomal subunit protein uS11c of Gossypium hirsutum (Upland cotton).